The sequence spans 420 residues: UDP-N-acetylglucosamine 1-carboxyvinyltransferase (420 aa).

22-23 (KN) contacts phosphoenolpyruvate. Position 92 (Arg-92) interacts with UDP-N-acetyl-alpha-D-glucosamine. The active-site Proton donor is the Cys-116. 2-(S-cysteinyl)pyruvic acid O-phosphothioketal is present on Cys-116. UDP-N-acetyl-alpha-D-glucosamine-binding positions include 121-125 (RPVDQ), Asp-304, and Ile-326.

The protein belongs to the EPSP synthase family. MurA subfamily.

The protein localises to the cytoplasm. It carries out the reaction phosphoenolpyruvate + UDP-N-acetyl-alpha-D-glucosamine = UDP-N-acetyl-3-O-(1-carboxyvinyl)-alpha-D-glucosamine + phosphate. The protein operates within cell wall biogenesis; peptidoglycan biosynthesis. Functionally, cell wall formation. Adds enolpyruvyl to UDP-N-acetylglucosamine. This chain is UDP-N-acetylglucosamine 1-carboxyvinyltransferase, found in Paraburkholderia phymatum (strain DSM 17167 / CIP 108236 / LMG 21445 / STM815) (Burkholderia phymatum).